A 73-amino-acid polypeptide reads, in one-letter code: Homeodomain-only protein (73 aa).

A DNA-binding region (homeobox; degenerate) is located at residues 3–62 (AETASGPTEDQVEILEYNFNKVDKHPDSTTLCLIAAEAGLSEEETQKWFKQRLAKWRRSE).

In terms of assembly, interacts with serum response factor (SRF). Component of a large complex containing histone deacetylases such as HDAC2. Interacts with the acetylated forms of HSPA1A and HSPA1B. Interacts with HSPA8. Widely expressed. Expressed in the heart, brain, placenta, lung, skeletal and smooth muscles, uterus, urinary bladder, kidney and spleen. Down-regulated in some types of cancer such as lung cancer, choriocarcinoma, head and neck squamous cell carcinoma and oral squamous cell carcinoma.

The protein resides in the nucleus. It localises to the cytoplasm. Its function is as follows. Atypical homeodomain protein which does not bind DNA and is required to modulate cardiac growth and development. Acts via its interaction with SRF, thereby modulating the expression of SRF-dependent cardiac-specific genes and cardiac development. Prevents SRF-dependent transcription either by inhibiting SRF binding to DNA or by recruiting histone deacetylase (HDAC) proteins that prevent transcription by SRF. Overexpression causes cardiac hypertrophy. May act as a tumor suppressor. Acts as a co-chaperone for HSPA1A and HSPA1B chaperone proteins and assists in chaperone-mediated protein refolding. This is Homeodomain-only protein (HOPX) from Homo sapiens (Human).